We begin with the raw amino-acid sequence, 356 residues long: OVARIAN TUMOR DOMAIN-containing deubiquitinating enzyme 10 (356 aa).

The tract at residues 86–117 is disordered; it reads DYSHQNQQQQHQQEGYTNNYSNNNNGYAWNDQ. Over residues 89–115 the composition is skewed to low complexity; the sequence is HQNQQQQHQQEGYTNNYSNNNNGYAWN. Residues 213–337 form the OTU domain; sequence FTEVKVPGDG…EVHYNAIYLN (125 aa). Asp-221 is a catalytic residue. Residue Cys-224 is the Nucleophile of the active site. His-330 is a catalytic residue.

It belongs to the peptidase C85 family.

It catalyses the reaction Thiol-dependent hydrolysis of ester, thioester, amide, peptide and isopeptide bonds formed by the C-terminal Gly of ubiquitin (a 76-residue protein attached to proteins as an intracellular targeting signal).. Its function is as follows. Hydrolase that can remove conjugated ubiquitin from proteins in vitro and may therefore play an important regulatory role at the level of protein turnover by preventing degradation. Cysteine protease with a preference for 'Lys-63' over 'Lys-48' over 'Met-1' -linked ubiquitin (UB) tetramers as substrates. Also cleaves RUB-GST fusion. The protein is OVARIAN TUMOR DOMAIN-containing deubiquitinating enzyme 10 of Arabidopsis thaliana (Mouse-ear cress).